The primary structure comprises 780 residues: Replication origin-binding protein (780 aa).

In terms of domain architecture, Helicase ATP-binding spans 39 to 195; sequence SFENVRQPIK…AAFKPDTQIA (157 aa). 52–59 contacts ATP; that stretch reads AAMGSGKT.

It belongs to the herpesviridae OriBP family.

Its function is as follows. Probably involved in DNA replication. Binds the origin of replication (ori). The polypeptide is Replication origin-binding protein (U73) (Human herpesvirus 6A (strain Uganda-1102) (HHV-6 variant A)).